A 76-amino-acid polypeptide reads, in one-letter code: MATWLAILLIVAALIIGLVGGFFLARKYMMDYLKKNPPINEEMLRMMMMQMGQKPSQKKINQMMTMMNKNMDQKMK.

Residues 4–24 traverse the membrane as a helical segment; that stretch reads WLAILLIVAALIIGLVGGFFL.

The protein belongs to the UPF0154 family.

It localises to the cell membrane. This Staphylococcus carnosus (strain TM300) protein is UPF0154 protein Sca_0984.